A 165-amino-acid polypeptide reads, in one-letter code: Small ribosomal subunit protein uS5 (165 aa).

The S5 DRBM domain maps to 13–76 (LEEKVLVVNR…EAAKKNLMKI (64 aa)).

This sequence belongs to the universal ribosomal protein uS5 family. Part of the 30S ribosomal subunit. Contacts proteins S4 and S8.

Its function is as follows. With S4 and S12 plays an important role in translational accuracy. Located at the back of the 30S subunit body where it stabilizes the conformation of the head with respect to the body. This is Small ribosomal subunit protein uS5 from Chlamydia pneumoniae (Chlamydophila pneumoniae).